The chain runs to 498 residues: Protein spinster homolog 3 (498 aa).

Helical transmembrane passes span 49–71 (IAVAVLCYINLLNYMDRYTIAGV), 87–107 (GLLQTVFICSFMFLAPVFGYL), 114–134 (KLIMIVGLVMWIVTTLGSSFV), 148–168 (LVGTGEASYSTIAPTIIGDLF), 175–195 (LMISFFYIFIPVGSGLGYIIG), 207–227 (WALRVSPALGGLGLLLLVFLI), 260–280 (FVWSSLGVTAMAFVTGALAFW), 309–329 (YIFGAITVVTGVVGVFLGTCI), 343–363 (LICAVGMLSSSPCFFIAIVLA), 373–393 (FIAIGETLLSLNWAILADILL), 407–427 (LQIMVCHLLGDAGSPYLIGAI), and 451–471 (LLCPFIGVLGGLFFLMTSLYI).

The protein belongs to the major facilitator superfamily. Spinster (TC 2.A.1.49) family.

It localises to the membrane. Sphingolipid transporter. This is Protein spinster homolog 3 (spns3) from Danio rerio (Zebrafish).